Consider the following 109-residue polypeptide: Parvalbumin beta (109 aa).

An N-acetylalanine modification is found at A2. EF-hand domains follow at residues 39 to 74 and 78 to 109; these read KSADEVKKAFAIIDQDKSGYIEEEELKLFLQNFKAG and LSDAETKAFLKAGDSDGDGKIGVDEFAAMIKG. 11 residues coordinate Ca(2+): D52, D54, S56, Y58, E60, E63, D91, D93, D95, K97, and E102.

Belongs to the parvalbumin family. Post-translationally, the N-terminus is blocked.

In terms of biological role, in muscle, parvalbumin is thought to be involved in relaxation after contraction. It binds two calcium ions. The polypeptide is Parvalbumin beta (Scomber scombrus (Atlantic mackerel)).